The primary structure comprises 349 residues: Small ribosomal subunit protein uS2 (349 aa).

Positions 302-334 (QNNYDPSKRGYNPKYVNHKSTFNKFNNKKPVDS) are disordered.

The protein belongs to the universal ribosomal protein uS2 family.

The polypeptide is Small ribosomal subunit protein uS2 (Ureaplasma parvum serovar 3 (strain ATCC 27815 / 27 / NCTC 11736)).